The chain runs to 154 residues: Xanthine-guanine phosphoribosyltransferase (154 aa).

5-phospho-alpha-D-ribose 1-diphosphate is bound by residues 37–38 (RG), R69, and 88–96 (EDLVDSGDT). R69 contributes to the GMP binding site. Position 89 (D89) interacts with Mg(2+). Guanine is bound by residues D92 and I135. Residues D92 and I135 each contribute to the xanthine site. Residues 92–96 (DSGDT) and 134–135 (WI) each bind GMP.

Belongs to the purine/pyrimidine phosphoribosyltransferase family. XGPT subfamily. In terms of assembly, homotetramer. It depends on Mg(2+) as a cofactor.

The protein localises to the cell inner membrane. The catalysed reaction is GMP + diphosphate = guanine + 5-phospho-alpha-D-ribose 1-diphosphate. It carries out the reaction XMP + diphosphate = xanthine + 5-phospho-alpha-D-ribose 1-diphosphate. It catalyses the reaction IMP + diphosphate = hypoxanthine + 5-phospho-alpha-D-ribose 1-diphosphate. Its pathway is purine metabolism; GMP biosynthesis via salvage pathway; GMP from guanine: step 1/1. It participates in purine metabolism; XMP biosynthesis via salvage pathway; XMP from xanthine: step 1/1. In terms of biological role, purine salvage pathway enzyme that catalyzes the transfer of the ribosyl-5-phosphate group from 5-phospho-alpha-D-ribose 1-diphosphate (PRPP) to the N9 position of the 6-oxopurines guanine and xanthine to form the corresponding ribonucleotides GMP (guanosine 5'-monophosphate) and XMP (xanthosine 5'-monophosphate), with the release of PPi. To a lesser extent, also acts on hypoxanthine. The sequence is that of Xanthine-guanine phosphoribosyltransferase from Vibrio parahaemolyticus serotype O3:K6 (strain RIMD 2210633).